Reading from the N-terminus, the 476-residue chain is Tubulointerstitial nephritis antigen (476 aa).

An N-linked (GlcNAc...) asparagine glycan is attached at Asn38. The region spanning 59-107 (NFGCCEDRDDGCVTEFYAANALCYCDKFCDRENSDCCPDYKSFCREEKE) is the SMB domain. 6 disulfides stabilise this stretch: Cys63–Cys70, Cys70–Cys102, Cys81–Cys83, Cys81–Cys95, Cys87–Cys94, and Cys95–Cys102. N-linked (GlcNAc...) asparagine glycosylation is found at Asn175, Asn314, Asn360, and Asn455.

The protein belongs to the peptidase C1 family. Post-translationally, it has been suggested that the active SMB domain may be permitted considerable disulfide bond heterogeneity or variability, thus 2 alternate disulfide patterns based on 3D structures are described with 1 disulfide bond conserved in both. In terms of tissue distribution, expressed in the kidney cortex, small intestine and cornea.

It is found in the secreted. It localises to the extracellular space. The protein resides in the extracellular matrix. The protein localises to the basement membrane. Mediates adhesion of proximal tubule epithelial cells via integrins alpha3-beta1 and alphaV-beta3. This is a non catalytic peptidase C1 family protein. The polypeptide is Tubulointerstitial nephritis antigen (TINAG) (Homo sapiens (Human)).